Here is a 360-residue protein sequence, read N- to C-terminus: Nucleoporin SEH1-A (360 aa).

WD repeat units lie at residues 10–49, 55–96, 111–152, 160–210, 217–258, and 276–315; these read DHKDLIHDVSFDFHGRRMATCSSDQSVKVWDKSENGNWHC, THSG…SNDK, DSRT…NLSQ, SCKL…RKYA, SVSD…KELS, and NHNSQVWRVSWNITGTVLASSGDDGTVRLWKANYMDNWKC.

This sequence belongs to the WD repeat SEC13 family. As to quaternary structure, component of the Nup107-160 subcomplex of the nuclear pore complex (NPC). The Nup107-160 subcomplex includes NUP160, NUP133, NUP107, NUP98, NUP85, NUP43, NUP37, SEH1 and SEC13. Component of the GATOR2 subcomplex, composed of MIOS, SEC13, SEH1L, WDR24 and WDR59. The GATOR2 complex interacts with CASTOR1 and CASTOR2; the interaction is negatively regulated by arginine. The GATOR2 complex interacts with SESN1, SESN2 and SESN3; the interaction is negatively regulated by amino acids.

Its subcellular location is the chromosome. The protein localises to the centromere. It is found in the kinetochore. The protein resides in the nucleus. It localises to the nuclear pore complex. Its subcellular location is the lysosome membrane. Its activity is regulated as follows. The GATOR2 complex is negatively regulated by the upstream amino acid sensors CASTOR1 and SESN2, which sequester the GATOR2 complex in absence of amino acids. In the presence of abundant amino acids, GATOR2 is released from CASTOR1 and SESN2 and activated. Component of the Nup107-160 subcomplex of the nuclear pore complex (NPC). The Nup107-160 subcomplex is required for the assembly of a functional NPC. The Nup107-160 subcomplex is also required for normal kinetochore microtubule attachment, mitotic progression and chromosome segregation. This subunit plays a role in recruitment of the Nup107-160 subcomplex to the kinetochore. Functionally, as a component of the GATOR2 complex, functions as an activator of the amino acid-sensing branch of the mTORC1 signaling pathway. The GATOR2 complex indirectly activates mTORC1 through the inhibition of the GATOR1 subcomplex. GATOR2 probably acts as an E3 ubiquitin-protein ligase toward GATOR1. In the presence of abundant amino acids, the GATOR2 complex mediates ubiquitination of the NPRL2 core component of the GATOR1 complex, leading to GATOR1 inactivation. In the absence of amino acids, GATOR2 is inhibited, activating the GATOR1 complex. This chain is Nucleoporin SEH1-A (seh1l-a), found in Xenopus laevis (African clawed frog).